Reading from the N-terminus, the 356-residue chain is Protein RecA (356 aa).

67-74 (GPESSGKT) is an ATP binding site.

This sequence belongs to the RecA family.

It localises to the cytoplasm. In terms of biological role, can catalyze the hydrolysis of ATP in the presence of single-stranded DNA, the ATP-dependent uptake of single-stranded DNA by duplex DNA, and the ATP-dependent hybridization of homologous single-stranded DNAs. It interacts with LexA causing its activation and leading to its autocatalytic cleavage. The chain is Protein RecA from Yersinia pseudotuberculosis serotype I (strain IP32953).